Consider the following 572-residue polypeptide: MSTEANKPRGNQHQEAKSDAEIAQAAFMRPIVDVAAEKLGIAAEHLAPYGHYKAKIDLNYLSSLDSRPDGKLVLVTAISPTPAGEGKTTTTVGLTDALNHIGKKAVACLREPSLGPCFGVKGGAAGGGYAQVVPMEDINLHFTGDFHAIGAANNLLAALIDNHVYWGNELGIDPRRIGWRRAVDMNDRALRSIVSSLGGVSNGYPREDGFDITVASEVMAIFCLATDLDDLQRRLGNIIVGHTKDRKPIRASELSAAGSMAVLLKDAIAPNLVQTLEHNPAFIHGGPFANIAHGCNSVIATRAALKLSDYVVTEAGFGADLGAEKFFDIKCRKAGLSPSAVVIVATVRALKMHGGVAKDALKTENVEAVQKGFANLERHIQNVRKFGVPVVVGVNKFSADTDAEFQMLHDLCAKMGVPCVSSDHWANGGAGAADLAHEVVKLVEGGSADFKPLYPEDMPLWDKLRTIATEIYGASDITADAAVRKRFDELQKEGFGHLPICVAKTQYSFSTDANLRGAPSGHVIPVRDLRLSAGAEFVVAICGDIMTMPGLPKVPAANAIRLASNGTIAGLF.

Residue 81–88 (TPAGEGKT) coordinates ATP.

It belongs to the formate--tetrahydrofolate ligase family.

The catalysed reaction is (6S)-5,6,7,8-tetrahydrofolate + formate + ATP = (6R)-10-formyltetrahydrofolate + ADP + phosphate. It functions in the pathway one-carbon metabolism; tetrahydrofolate interconversion. The protein is Formate--tetrahydrofolate ligase of Granulibacter bethesdensis (strain ATCC BAA-1260 / CGDNIH1).